Consider the following 69-residue polypeptide: Large ribosomal subunit protein uL29 (69 aa).

The protein belongs to the universal ribosomal protein uL29 family.

The sequence is that of Large ribosomal subunit protein uL29 from Treponema denticola (strain ATCC 35405 / DSM 14222 / CIP 103919 / JCM 8153 / KCTC 15104).